Here is a 142-residue protein sequence, read N- to C-terminus: ATP synthase epsilon chain (142 aa).

The protein belongs to the ATPase epsilon chain family. As to quaternary structure, F-type ATPases have 2 components, CF(1) - the catalytic core - and CF(0) - the membrane proton channel. CF(1) has five subunits: alpha(3), beta(3), gamma(1), delta(1), epsilon(1). CF(0) has three main subunits: a, b and c.

It localises to the cell inner membrane. Functionally, produces ATP from ADP in the presence of a proton gradient across the membrane. The protein is ATP synthase epsilon chain of Shewanella pealeana (strain ATCC 700345 / ANG-SQ1).